The chain runs to 285 residues: 4-diphosphocytidyl-2-C-methyl-D-erythritol kinase (285 aa).

Lys-12 is a catalytic residue. Position 95–105 (95–105) interacts with ATP; it reads PMGGGVGGGSS. Asp-137 is an active-site residue.

It belongs to the GHMP kinase family. IspE subfamily.

The catalysed reaction is 4-CDP-2-C-methyl-D-erythritol + ATP = 4-CDP-2-C-methyl-D-erythritol 2-phosphate + ADP + H(+). It participates in isoprenoid biosynthesis; isopentenyl diphosphate biosynthesis via DXP pathway; isopentenyl diphosphate from 1-deoxy-D-xylulose 5-phosphate: step 3/6. Functionally, catalyzes the phosphorylation of the position 2 hydroxy group of 4-diphosphocytidyl-2C-methyl-D-erythritol. The sequence is that of 4-diphosphocytidyl-2-C-methyl-D-erythritol kinase from Actinobacillus pleuropneumoniae serotype 5b (strain L20).